A 365-amino-acid chain; its full sequence is Probable receptor-like protein kinase At2g47060 (365 aa).

Positions 18 to 48 (DYGGRHNQAKHFPPGNDARHHQASETAQKGP) are disordered. The region spanning 73–353 (FGSNSLIGEG…IVVKALQPLL (281 aa)) is the Protein kinase domain. Residues 79–87 (IGEGSYGRV) and Lys-101 contribute to the ATP site. Tyr-145 carries the post-translational modification Phosphotyrosine. Asp-203 serves as the catalytic Proton acceptor. A phosphoserine mark is found at Ser-207 and Ser-237. Thr-238 and Thr-243 each carry phosphothreonine. Tyr-251 is subject to Phosphotyrosine.

Belongs to the protein kinase superfamily. Ser/Thr protein kinase family.

The enzyme catalyses L-seryl-[protein] + ATP = O-phospho-L-seryl-[protein] + ADP + H(+). It catalyses the reaction L-threonyl-[protein] + ATP = O-phospho-L-threonyl-[protein] + ADP + H(+). The chain is Probable receptor-like protein kinase At2g47060 from Arabidopsis thaliana (Mouse-ear cress).